The primary structure comprises 485 residues: E3 ubiquitin-protein ligase RNF14 (485 aa).

One can recognise an RWD domain in the interval 11 to 137 (DELLALASIY…QFLKEETLTY (127 aa)). The D-box signature appears at 37–45 (RIYLDLPQN). A TRIAD supradomain region spans residues 217–458 (KLFLCSICFC…DSESPCFNRL (242 aa)). The Zn(2+) site is built by Cys-221, Cys-224, Cys-239, His-241, Cys-244, Cys-247, Cys-266, Cys-271, Cys-310, Cys-315, Cys-330, Cys-333, Cys-338, Cys-341, and His-346. The segment at 221–271 (CSICFCEKLGSDCMYFLECKHVYCKACLKDYFEIQIKDGQVKCLNCPEPQC) adopts an RING-type 1 zinc-finger fold. Residues 290–351 (ARYDRLLLQS…RLTYHGLSPC (62 aa)) form an IBR-type zinc finger. Residue Ser-349 is modified to Phosphoserine. Zn(2+)-binding residues include Cys-351, Cys-405, and Cys-408. An RING-type 2; atypical zinc finger spans residues 405-434 (CPCCGTPIQKLDGCNKMTCTGCMQYFCWIC). The active site involves Cys-418. Zn(2+) is bound by residues Cys-423, Cys-426, Cys-431, Cys-434, His-446, and Cys-454.

This sequence belongs to the RBR family. RNF14 subfamily. As to quaternary structure, interacts with GCN1; interaction takes place in response to ribosome collisions and is required for ubiquitination of EEF1A1/eEF1A. Interacts with the ubiquitin-conjugating enzymes UBE2E1 and UBE2E2. Interacts with AR/androgen receptor. Interacts with TCF7/TCF1, TCF7L1/TCF3 and TCF7L2/TCF4; promoting Wnt signaling. Post-translationally, RING-type zinc finger-dependent and UBE2E2-dependent autoubiquitination.

It localises to the cytoplasm. Its subcellular location is the nucleus. It carries out the reaction [E2 ubiquitin-conjugating enzyme]-S-ubiquitinyl-L-cysteine + [acceptor protein]-L-lysine = [E2 ubiquitin-conjugating enzyme]-L-cysteine + [acceptor protein]-N(6)-ubiquitinyl-L-lysine.. It functions in the pathway protein modification; protein ubiquitination. Its function is as follows. E3 ubiquitin-protein ligase that plays a key role in the RNF14-RNF25 translation quality control pathway, a pathway that takes place when a ribosome has stalled during translation, and which promotes ubiquitination and degradation of translation factors on stalled ribosomes. Recruited to stalled ribosomes by the ribosome collision sensor GCN1 and mediates 'Lys-6'-linked ubiquitination of target proteins, leading to their degradation. Mediates ubiquitination of EEF1A1/eEF1A and ETF1/eRF1 translation factors on stalled ribosomes, leading to their degradation. Also catalyzes ubiquitination of ribosomal proteins RPL0, RPL1, RPL12, RPS13 and RPS17. Specifically required to resolve RNA-protein cross-links caused by reactive aldehydes, which trigger translation stress by stalling ribosomes: acts by catalying 'Lys-6'-linked ubiquitination of RNA-protein cross-links, leading to their removal by the ATP-dependent unfoldase VCP and subsequent degradation by the proteasome. Independently of its function in the response to stalled ribosomes, acts as a regulator of transcription in Wnt signaling via its interaction with TCF transcription factors (TCF7/TCF1, TCF7L1/TCF3 and TCF7L2/TCF4). May also play a role as a coactivator for androgen- and, to a lesser extent, progesterone-dependent transcription. This chain is E3 ubiquitin-protein ligase RNF14, found in Mus musculus (Mouse).